The primary structure comprises 436 residues: [Pyruvate dehydrogenase (acetyl-transferring)] kinase isozyme 1, mitochondrial (436 aa).

The N-terminal 28 residues, 1 to 28 (MRLARLLRGAALAGPGPGLRAAGFSRSF), are a transit peptide targeting the mitochondrion. Residue tyrosine 136 is modified to Phosphotyrosine; by FGFR1. The region spanning 163–393 (YKESFGVDPV…DAVIYIKALS (231 aa)) is the Histidine kinase domain. Position 243 is a phosphotyrosine; by FGFR1, ABL1, FLT3 and JAK2 (tyrosine 243). Tyrosine 244 bears the Phosphotyrosine; by FGFR1 mark. ATP-binding positions include 279–286 (ELFKNAMR), aspartate 318, 337–338 (ST), and 354–359 (GFGYGL). Threonine 338 carries the phosphothreonine modification. Lysine 405 carries the N6-succinyllysine modification.

This sequence belongs to the PDK/BCKDK protein kinase family. Homodimer, and heterodimer with PDK2. Interacts with the pyruvate dehydrogenase complex subunit DLAT, and is part of the multimeric pyruvate dehydrogenase complex that contains multiple copies of pyruvate dehydrogenase (E1), dihydrolipoamide acetyltransferase (DLAT, E2) and lipoamide dehydrogenase (DLD, E3). Interacts with phosphoglycerate kinase PGK1; the interaction is direct, occurs under hypoxic conditions and leads to PDK1-mediated inhibition of pyruvate dehydrogenase complex activity. Phosphorylated by constitutively activated ABL1, FGFR1, FLT3 and JAK2 (in vitro), and this may also occur in cancer cells that express constitutively activated ABL1, FGFR1, FLT3 and JAK2. Phosphorylation at Tyr-243 and Tyr-244 strongly increases kinase activity, while phosphorylation at Tyr-136 has a lesser effect. Phosphorylated under hypoxic conditions at Thr-338 by phosphoglycerate kinase PGK1 which has an activating effect. Expressed predominantly in the heart. Detected at lower levels in liver, skeletal muscle and pancreas.

It is found in the mitochondrion matrix. The enzyme catalyses L-seryl-[pyruvate dehydrogenase E1 alpha subunit] + ATP = O-phospho-L-seryl-[pyruvate dehydrogenase E1 alpha subunit] + ADP + H(+). With respect to regulation, activity is enhanced by binding to the pyruvate dehydrogenase subunit DLAT. Inhibited by AZD7545; this compound interferes with DLAT binding and thereby inhibits kinase activity. Inhibited by dichloroacetate and radicicol. Activated under hypoxic conditions by phosphoglycerate kinase PGK1-mediated phosphorylation at Thr-338. In terms of biological role, kinase that plays a key role in regulation of glucose and fatty acid metabolism and homeostasis via phosphorylation of the pyruvate dehydrogenase subunits PDHA1 and PDHA2. This inhibits pyruvate dehydrogenase activity, and thereby regulates metabolite flux through the tricarboxylic acid cycle, down-regulates aerobic respiration and inhibits the formation of acetyl-coenzyme A from pyruvate. Plays an important role in cellular responses to hypoxia and is important for cell proliferation under hypoxia. This is [Pyruvate dehydrogenase (acetyl-transferring)] kinase isozyme 1, mitochondrial (PDK1) from Homo sapiens (Human).